The sequence spans 27 residues: Chitinase 47 kDa (27 aa).

The GH18 domain maps to 3 to 27; that stretch reads SKVVGYFTEWGTYDRKYYVKNIEXS.

Belongs to the glycosyl hydrolase 18 family. Chitinase class II subfamily. As to quaternary structure, homodimer.

The enzyme catalyses Random endo-hydrolysis of N-acetyl-beta-D-glucosaminide (1-&gt;4)-beta-linkages in chitin and chitodextrins.. In terms of biological role, able to cleave chitin oligomers from N=3 to 6. This chain is Chitinase 47 kDa, found in Streptomyces olivaceoviridis (Streptomyces corchorusii).